Here is a 301-residue protein sequence, read N- to C-terminus: Sulfate adenylyltransferase subunit 2 (301 aa).

Residues Arg279–Phe301 are disordered.

Belongs to the PAPS reductase family. CysD subfamily. In terms of assembly, heterodimer composed of CysD, the smaller subunit, and CysN.

It carries out the reaction sulfate + ATP + H(+) = adenosine 5'-phosphosulfate + diphosphate. It participates in sulfur metabolism; hydrogen sulfide biosynthesis; sulfite from sulfate: step 1/3. With CysN forms the ATP sulfurylase (ATPS) that catalyzes the adenylation of sulfate producing adenosine 5'-phosphosulfate (APS) and diphosphate, the first enzymatic step in sulfur assimilation pathway. APS synthesis involves the formation of a high-energy phosphoric-sulfuric acid anhydride bond driven by GTP hydrolysis by CysN coupled to ATP hydrolysis by CysD. The polypeptide is Sulfate adenylyltransferase subunit 2 (Geotalea uraniireducens (strain Rf4) (Geobacter uraniireducens)).